The chain runs to 474 residues: Aspartyl/glutamyl-tRNA(Asn/Gln) amidotransferase subunit B (474 aa).

This sequence belongs to the GatB/GatE family. GatB subfamily. As to quaternary structure, heterotrimer of A, B and C subunits.

It carries out the reaction L-glutamyl-tRNA(Gln) + L-glutamine + ATP + H2O = L-glutaminyl-tRNA(Gln) + L-glutamate + ADP + phosphate + H(+). The enzyme catalyses L-aspartyl-tRNA(Asn) + L-glutamine + ATP + H2O = L-asparaginyl-tRNA(Asn) + L-glutamate + ADP + phosphate + 2 H(+). Allows the formation of correctly charged Asn-tRNA(Asn) or Gln-tRNA(Gln) through the transamidation of misacylated Asp-tRNA(Asn) or Glu-tRNA(Gln) in organisms which lack either or both of asparaginyl-tRNA or glutaminyl-tRNA synthetases. The reaction takes place in the presence of glutamine and ATP through an activated phospho-Asp-tRNA(Asn) or phospho-Glu-tRNA(Gln). The sequence is that of Aspartyl/glutamyl-tRNA(Asn/Gln) amidotransferase subunit B from Persephonella marina (strain DSM 14350 / EX-H1).